The primary structure comprises 874 residues: MKSNQIRQAFLDYFASKGHQIVSSSSLVPAGDPTLLFTNAGMNQFKDVFLGFDKRPYTRATSSQKCVRAGGKHNDLENVGYTARHHTFFEMLGNFSFGDYFKRDAIHYAWELLTQVFKLPADKLTVTVYAEDDEAYDIWTREIGVPAERVIRIGDNKGARYASDNFWMMGDTGPCGPCTEIFYDHGEHIPGGPPGSPDEDGDRFIEIWNNVFMQFNRDEQGVMHPLPKPSVDTGMGLERIAAVLQGVHSNYEIDLFQNLIKAAARVTNTTDLDSPSLKVLADHIRACSFLIADGVIPGNEGRGYVLRRIIRRAIRHGYKLGARQAFFHLMVSALVNEMGDAYPELKSGEERITSILRQEEDRFFETIEHGMAILEAELEEMAKTGNHVFNGETAFKLHDTFGFPLDLTADVCRERGVSVDSAAFDAAMARQKEQARAAGKFKMAANLEYTGNATTFHGYDTLEAQGKVLALYKDGSAVPALNEGELGVVVLDNTPFYAESGGQVGDQGILKGAEGIFQVEDTQKIQASVFGHHGVLSTGTLRVGDEVSARVDLLSRHRTMRHHSATHLMHKALRAVLGSHVQQKGSLVDPDKTRFDFSHNAPVTADEIRRIEDIVNAEILANTPTLARVMPIDEAQKTGAMMLFGEKYGDEVRVLDIGTSRELCGGTHVSRTGDIGLFKIVSESGVAAGVRRIEAAAGDVALRHIQQQQQLLADAAASFKVPAIELAGKISQTLEQIKALEKELARLKSKLASSQGDELASQAVNIGGIKVLAATLEGADANTLRETMDKLKDKLKTAAIVLASVNGDKVSVAAGVTTDTTARIKAGELVNFVAAQVGGKGGGKPDMAMAGGSDPSQLPRALASVAGWVEERLK.

Positions 563, 567, 664, and 668 each coordinate Zn(2+).

This sequence belongs to the class-II aminoacyl-tRNA synthetase family. Zn(2+) is required as a cofactor.

The protein resides in the cytoplasm. It carries out the reaction tRNA(Ala) + L-alanine + ATP = L-alanyl-tRNA(Ala) + AMP + diphosphate. Its function is as follows. Catalyzes the attachment of alanine to tRNA(Ala) in a two-step reaction: alanine is first activated by ATP to form Ala-AMP and then transferred to the acceptor end of tRNA(Ala). Also edits incorrectly charged Ser-tRNA(Ala) and Gly-tRNA(Ala) via its editing domain. The protein is Alanine--tRNA ligase of Methylobacillus flagellatus (strain ATCC 51484 / DSM 6875 / VKM B-1610 / KT).